Here is a 97-residue protein sequence, read N- to C-terminus: Putative septation protein SpoVG (97 aa).

Belongs to the SpoVG family.

Essential for sporulation. Interferes with or is a negative regulator of the pathway leading to asymmetric septation. This chain is Putative septation protein SpoVG, found in Bacillus licheniformis (strain ATCC 14580 / DSM 13 / JCM 2505 / CCUG 7422 / NBRC 12200 / NCIMB 9375 / NCTC 10341 / NRRL NRS-1264 / Gibson 46).